The following is a 149-amino-acid chain: D-aminoacyl-tRNA deacylase (149 aa).

The Gly-cisPro motif, important for rejection of L-amino acids signature appears at G137–P138.

This sequence belongs to the DTD family. In terms of assembly, homodimer.

The protein localises to the cytoplasm. The enzyme catalyses glycyl-tRNA(Ala) + H2O = tRNA(Ala) + glycine + H(+). It carries out the reaction a D-aminoacyl-tRNA + H2O = a tRNA + a D-alpha-amino acid + H(+). An aminoacyl-tRNA editing enzyme that deacylates mischarged D-aminoacyl-tRNAs. Also deacylates mischarged glycyl-tRNA(Ala), protecting cells against glycine mischarging by AlaRS. Acts via tRNA-based rather than protein-based catalysis; rejects L-amino acids rather than detecting D-amino acids in the active site. By recycling D-aminoacyl-tRNA to D-amino acids and free tRNA molecules, this enzyme counteracts the toxicity associated with the formation of D-aminoacyl-tRNA entities in vivo and helps enforce protein L-homochirality. The protein is D-aminoacyl-tRNA deacylase of Alkaliphilus metalliredigens (strain QYMF).